The primary structure comprises 566 residues: Transmembrane protein 151B (566 aa).

Over residues 1 to 11 (MSPPGSAAGES) the composition is skewed to low complexity. The disordered stretch occupies residues 1-25 (MSPPGSAAGESAAGGGGGGGGPGVS). Residues 12 to 23 (AAGGGGGGGGPG) show a composition bias toward gly residues. A run of 2 helical transmembrane segments spans residues 65-85 (CLLL…CHVT) and 112-132 (YVYI…VECW). Over residues 495–512 (VNEASCPTEQTRLSSQAS) the composition is skewed to polar residues. Residues 495–529 (VNEASCPTEQTRLSSQASMGDDEDDDEEEAGPPPP) form a disordered region. Residues 514–524 (GDDEDDDEEEA) show a composition bias toward acidic residues.

It belongs to the TMEM151 family.

Its subcellular location is the membrane. This is Transmembrane protein 151B (TMEM151B) from Homo sapiens (Human).